Here is a 109-residue protein sequence, read N- to C-terminus: Large ribosomal subunit protein uL22 (109 aa).

It belongs to the universal ribosomal protein uL22 family. Part of the 50S ribosomal subunit.

Its function is as follows. This protein binds specifically to 23S rRNA; its binding is stimulated by other ribosomal proteins, e.g. L4, L17, and L20. It is important during the early stages of 50S assembly. It makes multiple contacts with different domains of the 23S rRNA in the assembled 50S subunit and ribosome. The globular domain of the protein is located near the polypeptide exit tunnel on the outside of the subunit, while an extended beta-hairpin is found that lines the wall of the exit tunnel in the center of the 70S ribosome. The protein is Large ribosomal subunit protein uL22 of Methylibium petroleiphilum (strain ATCC BAA-1232 / LMG 22953 / PM1).